The chain runs to 538 residues: MVKQLKFSEDARQAMLRGVDQLANAVKVTIGPKGRNVVLDKEFTAPLITNDGVTIAKEIELEDPYENMGAKLVQEVANKTNEIAGDGTTTATVLAQAMIQEGLKNVTSGANPVGLRQGIDKAVKVAVEALHENSQKVENKNEIAQVGAISAADEEIGRYISEAMEKVGNDGVITIEESNGLNTELEVVEGMQFDRGYQSPYMVTDSDKMVAELERPYILVTDKKISSFQDILPLLEQVVQSNRPILIVADEVEGDALTNIVLNRMRGTFTAVAVKAPGFGDRRKAMLEDLAILTGAQVITDDLGLDLKDATIDMLGTASKVEVTKDNTTVVDGDGDENSIDARVSQLKSQIEETESDFDREKLQERLAKLAGGVAVIKVGAASETELKERKLRIEDALNSTRAAVEEGIVAGGGTALVNVYQKVSEIEAEGDIETGVNIVLKALTAPVRQIAENAGLEGSVIVERLKNAEPGVGFNAATNEWVNMLEVGIVDPTKVTRSALQHAASVAAMFLTTEAVVASIPEKNNDQPNMGGMPGMM.

ATP is bound by residues 29 to 32 (TIGP), 86 to 90 (DGTTT), Gly413, 476 to 478 (NAA), and Asp492.

Belongs to the chaperonin (HSP60) family. As to quaternary structure, forms a cylinder of 14 subunits composed of two heptameric rings stacked back-to-back. Interacts with the co-chaperonin GroES.

The protein localises to the cytoplasm. It carries out the reaction ATP + H2O + a folded polypeptide = ADP + phosphate + an unfolded polypeptide.. Together with its co-chaperonin GroES, plays an essential role in assisting protein folding. The GroEL-GroES system forms a nano-cage that allows encapsulation of the non-native substrate proteins and provides a physical environment optimized to promote and accelerate protein folding. The sequence is that of Chaperonin GroEL from Staphylococcus aureus (strain MRSA252).